The primary structure comprises 352 residues: Keratocan (352 aa).

The first 20 residues, 1–20, serve as a signal peptide directing secretion; it reads MAGTICFIMWVLFITDTVWS. The 39-residue stretch at 33-71 folds into the LRRNT domain; the sequence is DDWTIHDFECPMECFCPPSFPTALYCENRGLKEIPAIPS. 2 disulfide bridges follow: Cys42-Cys48 and Cys46-Cys58. LRR repeat units follow at residues 72–93, 96–117, 122–142, 143–164, 167–180, 193–213, 214–235, 238–258, 263–282, and 283–304; these read RIWY…PFEN, QLRW…KGAL, KLLF…PLPR, SLEQ…TFSN, NLTL…KLVD, NLMQ…RLPA, NTMQ…YFNV, KVAF…PSRG, SILD…RISA, and HLQH…VICP. The N-linked (GlcNAc...) (keratan sulfate) asparagine glycan is linked to Asn93. An N-linked (GlcNAc...) (keratan sulfate) asparagine glycan is attached at Asn167. The N-linked (GlcNAc...) asparagine glycan is linked to Asn222. A glycan (N-linked (GlcNAc...) asparagine) is linked at Asn298. The cysteines at positions 303 and 343 are disulfide-linked.

This sequence belongs to the small leucine-rich proteoglycan (SLRP) family. SLRP class II subfamily. Post-translationally, binds keratan sulfate chains. In terms of tissue distribution, cornea (at protein level). Increased expression in the stroma of keratoconus corneas. Also detected in trachea, and in low levels, in intestine, skeletal muscle, ovary, lung and putamen.

It is found in the secreted. It localises to the extracellular space. Its subcellular location is the extracellular matrix. Its function is as follows. May be important in developing and maintaining corneal transparency and for the structure of the stromal matrix. This chain is Keratocan (KERA), found in Homo sapiens (Human).